We begin with the raw amino-acid sequence, 1334 residues long: Aldehyde oxidase 4 (1334 aa).

The 2Fe-2S ferredoxin-type domain maps to 6-93; the sequence is DELIFFVNGK…GAAVTTVEGV (88 aa). 4 residues coordinate [2Fe-2S] cluster: C45, C50, C53, and C75. Q114 is a Mo-molybdopterin binding site. Residues C115, C118, C150, and C152 each coordinate [2Fe-2S] cluster. Residue C152 coordinates Mo-molybdopterin. One can recognise an FAD-binding PCMH-type domain in the interval 235 to 421; the sequence is FQGERTIWIM…LSVFIPYSGQ (187 aa). Residues 263 to 270, A345, T354, H358, D367, and A411 contribute to the FAD site; that span reads LVMGNTAV. Residues A802, 802–803, L1043, 1084–1087, Q1199, and L1263 each bind Mo-molybdopterin; these read AF and GSMG. E1265 acts as the Proton acceptor; for azaheterocycle hydroxylase activity in catalysis.

This sequence belongs to the xanthine dehydrogenase family. In terms of assembly, homodimer. The cofactor is [2Fe-2S] cluster. It depends on FAD as a cofactor. Mo-molybdopterin is required as a cofactor.

The protein localises to the cytoplasm. It carries out the reaction an aldehyde + O2 + H2O = a carboxylate + H2O2 + H(+). The catalysed reaction is retinal + O2 + H2O = retinoate + H2O2 + H(+). Functionally, aldehyde oxidase able to catalyze the oxidation of retinaldehyde into retinoate. Acts as a negative modulator of the epidermal trophism. May be able to oxidize a wide variety of aldehydes into their corresponding carboxylates and to hydroxylate azaheterocycles. In Rattus norvegicus (Rat), this protein is Aldehyde oxidase 4 (Aox4).